Reading from the N-terminus, the 497-residue chain is Malonate-semialdehyde dehydrogenase (497 aa).

5 residues coordinate NAD(+): F148, K172, E175, R176, and S225. Catalysis depends on C280, which acts as the Nucleophile. Residue E382 coordinates NAD(+).

It belongs to the aldehyde dehydrogenase family.

The enzyme catalyses 3-oxopropanoate + NAD(+) + CoA + H2O = hydrogencarbonate + acetyl-CoA + NADH + H(+). Involved in the degradation of beta-alanine. Likely catalyzes the NAD(+)- and CoA-dependent oxidative decarboxylation of malonate semialdehyde (3-oxopropanoate) to acetyl-CoA. The polypeptide is Malonate-semialdehyde dehydrogenase (Pseudomonas aeruginosa (strain ATCC 15692 / DSM 22644 / CIP 104116 / JCM 14847 / LMG 12228 / 1C / PRS 101 / PAO1)).